Reading from the N-terminus, the 375-residue chain is Queuine tRNA-ribosyltransferase (375 aa).

Aspartate 89 serves as the catalytic Proton acceptor. Residues 89-93 (DSGGF), aspartate 143, glutamine 187, and glycine 214 contribute to the substrate site. The segment at 245–251 (GVGKPED) is RNA binding. Residue aspartate 264 is the Nucleophile of the active site. The interval 269–273 (TRNAR) is RNA binding; important for wobble base 34 recognition. The Zn(2+) site is built by cysteine 302, cysteine 304, cysteine 307, and histidine 333.

It belongs to the queuine tRNA-ribosyltransferase family. As to quaternary structure, homodimer. Within each dimer, one monomer is responsible for RNA recognition and catalysis, while the other monomer binds to the replacement base PreQ1. Requires Zn(2+) as cofactor.

It catalyses the reaction 7-aminomethyl-7-carbaguanine + guanosine(34) in tRNA = 7-aminomethyl-7-carbaguanosine(34) in tRNA + guanine. It participates in tRNA modification; tRNA-queuosine biosynthesis. Catalyzes the base-exchange of a guanine (G) residue with the queuine precursor 7-aminomethyl-7-deazaguanine (PreQ1) at position 34 (anticodon wobble position) in tRNAs with GU(N) anticodons (tRNA-Asp, -Asn, -His and -Tyr). Catalysis occurs through a double-displacement mechanism. The nucleophile active site attacks the C1' of nucleotide 34 to detach the guanine base from the RNA, forming a covalent enzyme-RNA intermediate. The proton acceptor active site deprotonates the incoming PreQ1, allowing a nucleophilic attack on the C1' of the ribose to form the product. After dissociation, two additional enzymatic reactions on the tRNA convert PreQ1 to queuine (Q), resulting in the hypermodified nucleoside queuosine (7-(((4,5-cis-dihydroxy-2-cyclopenten-1-yl)amino)methyl)-7-deazaguanosine). The protein is Queuine tRNA-ribosyltransferase of Citrobacter koseri (strain ATCC BAA-895 / CDC 4225-83 / SGSC4696).